Consider the following 241-residue polypeptide: Pre-rRNA-processing protein pno1 (241 aa).

Positions 48 to 71 (APAKTSAEKKRGAKPQMRRVPIPP) are disordered. Thr52 is modified (phosphothreonine). Residues 162 to 214 (GDHLSRAIGRIAGQGGKTKFAIENASRTRIVLADSKIHILGGFTNIRIAKDAV) form the KH domain.

It belongs to the PNO1 family. As to quaternary structure, component of the small ribosomal subunit, ribosomal RNA processing complex (SSU RRP complex).

Its subcellular location is the cytoplasm. The protein localises to the nucleus. The protein resides in the nucleolus. Its function is as follows. Required for small ribosomal subunit (SSU) synthesis. Has a role in the processing of early nucleolar and late cytoplasmic pre-RNA species. The sequence is that of Pre-rRNA-processing protein pno1 (rbp28) from Schizosaccharomyces pombe (strain 972 / ATCC 24843) (Fission yeast).